We begin with the raw amino-acid sequence, 22 residues long: Peroxidase 5 (22 aa).

Belongs to the peroxidase family. Classical plant (class III) peroxidase subfamily. Requires heme b as cofactor. Ca(2+) serves as cofactor.

It localises to the secreted. The protein resides in the cell wall. The enzyme catalyses 2 a phenolic donor + H2O2 = 2 a phenolic radical donor + 2 H2O. Functionally, removal of H(2)O(2), oxidation of toxic reductants, biosynthesis and degradation of lignin, suberization, auxin catabolism, response to environmental stresses such as wounding, pathogen attack and oxidative stress. These functions might be dependent on each isozyme/isoform in each plant tissue. The polypeptide is Peroxidase 5 (Cycas revoluta (Sago palm)).